Here is a 383-residue protein sequence, read N- to C-terminus: Delta(12) acyl-lipid conjugase (11E,13E-forming) (383 aa).

The disordered stretch occupies residues 1–30; the sequence is MGEVGPTNRTKTKLDKQQESENRVPHEPPP. The span at 12 to 26 shows a compositional bias: basic and acidic residues; that stretch reads TKLDKQQESENRVPH. The next 2 membrane-spanning stretches (helical) occupy residues 56-76 and 84-104; these read VIHDIIILSFFYYVAANYIPM and VAWPIYWAIQGCVQLGILVLG. Positions 105-109 match the Histidine box-1 motif; that stretch reads HECGH. The Histidine box-2 motif lies at 141–145; that stretch reads HRRHH. 3 consecutive transmembrane segments (helical) span residues 179–199, 225–245, and 249–269; these read FLMIFGALLFGWPSYLLFNAN, VIASDVGLVFAYFVLYKIALA, and VWLICVYGVPYVILNGLIVLI. The Histidine box-3 motif lies at 315-319; sequence HLVHH.

The protein belongs to the fatty acid desaturase type 1 family. Expressed in developing seeds, but not in leaves.

Its subcellular location is the membrane. The catalysed reaction is a (9Z,12Z)-octadecadienoyl-containing glycerolipid + 2 Fe(II)-[cytochrome b5] + O2 + 2 H(+) = a (9Z,11E,13E)-octadecatrienoyl-containing glycerolipid + 2 Fe(III)-[cytochrome b5] + 2 H2O. The enzyme catalyses (9Z,12Z,15Z)-octadecatrienoyl-containing glycerolipid + 2 Fe(II)-[cytochrome b5] + O2 + 2 H(+) = a (9Z,11E,13E,15Z)-octadecatetraenoyl-containing glycerolipid + 2 Fe(III)-[cytochrome b5] + 2 H2O. It participates in lipid metabolism; polyunsaturated fatty acid biosynthesis. Converts linoleic acid to alpha-eleostearic acid (18:3(9Z,11E,13E)) and alpha-linolenic acid to alpha-parinaric acid (18:4(9Z,11E, 13E, 15Z)). Converts a single cis double bond at carbon 12 to two conjugated trans bonds at positions 11 and 13. This is Delta(12) acyl-lipid conjugase (11E,13E-forming) from Impatiens balsamina (Balsam).